A 495-amino-acid polypeptide reads, in one-letter code: Cysteine--tRNA ligase (495 aa).

Cysteine 35 is a binding site for Zn(2+). Positions 37–47 (PTVYSNVHLGN) match the 'HIGH' region motif. The Zn(2+) site is built by cysteine 230, histidine 255, and glutamate 259. Positions 287–291 (KMSKS) match the 'KMSKS' region motif. ATP is bound at residue lysine 290.

The protein belongs to the class-I aminoacyl-tRNA synthetase family. As to quaternary structure, monomer. It depends on Zn(2+) as a cofactor.

It is found in the cytoplasm. The catalysed reaction is tRNA(Cys) + L-cysteine + ATP = L-cysteinyl-tRNA(Cys) + AMP + diphosphate. The sequence is that of Cysteine--tRNA ligase from Flavobacterium psychrophilum (strain ATCC 49511 / DSM 21280 / CIP 103535 / JIP02/86).